Consider the following 268-residue polypeptide: Peptide transport system ATP-binding protein SapF (268 aa).

The ABC transporter domain occupies 6–251; sequence LEVRNLSKTF…PLHELTRRLI (246 aa). 47 to 54 contacts ATP; that stretch reads GENGSGKS.

The protein belongs to the ABC transporter superfamily.

The protein localises to the cell inner membrane. Its function is as follows. Involved in a peptide intake transport system that plays a role in the resistance to antimicrobial peptides. This Salmonella typhimurium (strain LT2 / SGSC1412 / ATCC 700720) protein is Peptide transport system ATP-binding protein SapF.